A 109-amino-acid polypeptide reads, in one-letter code: ATP-dependent Clp protease adapter protein ClpS (109 aa).

Residues methionine 1 to glutamate 20 are disordered.

This sequence belongs to the ClpS family. As to quaternary structure, binds to the N-terminal domain of the chaperone ClpA.

Its function is as follows. Involved in the modulation of the specificity of the ClpAP-mediated ATP-dependent protein degradation. This chain is ATP-dependent Clp protease adapter protein ClpS, found in Caulobacter vibrioides (strain NA1000 / CB15N) (Caulobacter crescentus).